Reading from the N-terminus, the 299-residue chain is Very long chain fatty acid elongase 5 (299 aa).

Residue Met1 is modified to N-acetylmethionine. The next 7 helical transmembrane spans lie at 26–46 (WFLLDNYIPTFICSVIYLLIV), 64–84 (ILVVYNLGLTLLSLYMFCELV), 112–132 (VLWWYYFSKLIEFMDTFFFIL), 139–158 (ITVLHVYHHASMLNIWWFVM), 168–187 (FGATLNSFIHVLMYSYYGLS), 205–225 (GQLLQFVLTIIQTSCGVIWPC), and 226–246 (TFPLGWLYFQIGYMISLIALF). The disordered stretch occupies residues 274-299 (MAAVNGHTNSFSPLENNVKPRKLRKD). Residues 279–288 (GHTNSFSPLE) show a composition bias toward polar residues. Ser285 bears the Phosphoserine mark.

This sequence belongs to the ELO family. ELOVL5 subfamily. As to quaternary structure, interacts with TECR. Ubiquitous. Highly expressed in the adrenal gland and testis. Weakly expressed in prostate, lung and brain. Expressed in the cerebellum.

It is found in the endoplasmic reticulum membrane. The protein localises to the cell projection. It localises to the dendrite. The enzyme catalyses a very-long-chain acyl-CoA + malonyl-CoA + H(+) = a very-long-chain 3-oxoacyl-CoA + CO2 + CoA. It catalyses the reaction (6Z,9Z,12Z)-octadecatrienoyl-CoA + malonyl-CoA + H(+) = (8Z,11Z,14Z)-3-oxoeicosatrienoyl-CoA + CO2 + CoA. The catalysed reaction is (9Z,12Z,15Z)-octadecatrienoyl-CoA + malonyl-CoA + H(+) = (11Z,14Z,17Z)-3-oxoeicosatrienoyl-CoA + CO2 + CoA. It carries out the reaction (9Z)-hexadecenoyl-CoA + malonyl-CoA + H(+) = 3-oxo-(11Z)-octadecenoyl-CoA + CO2 + CoA. The enzyme catalyses (9Z)-octadecenoyl-CoA + malonyl-CoA + H(+) = 3-oxo-(11Z)-eicosenoyl-CoA + CO2 + CoA. It catalyses the reaction (11Z)-octadecenoyl-CoA + malonyl-CoA + H(+) = 3-oxo-(13Z)-eicosenoyl-CoA + CO2 + CoA. The catalysed reaction is (9Z,12Z)-octadecadienoyl-CoA + malonyl-CoA + H(+) = (11Z,14Z)-3-oxoicosa-11,14-dienoyl-CoA + CO2 + CoA. It carries out the reaction (6Z,9Z,12Z,15Z)-octadecatetraenoyl-CoA + malonyl-CoA + H(+) = (8Z,11Z,14Z,17Z)-3-oxoicosatetraenoyl-CoA + CO2 + CoA. The enzyme catalyses (5Z,8Z,11Z,14Z)-eicosatetraenoyl-CoA + malonyl-CoA + H(+) = (7Z,10Z,13Z,16Z)-3-oxodocosatetraenoyl-CoA + CO2 + CoA. It catalyses the reaction (5Z,8Z,11Z,14Z,17Z)-eicosapentaenoyl-CoA + malonyl-CoA + H(+) = 3-oxo-(7Z,10Z,13Z,16Z,19Z)-docosapentaenoyl-CoA + CO2 + CoA. The protein operates within lipid metabolism; polyunsaturated fatty acid biosynthesis. In terms of biological role, catalyzes the first and rate-limiting reaction of the four reactions that constitute the long-chain fatty acids elongation cycle. This endoplasmic reticulum-bound enzymatic process allows the addition of 2 carbons to the chain of long- and very long-chain fatty acids (VLCFAs) per cycle. Condensing enzyme that acts specifically toward polyunsaturated acyl-CoA with the higher activity toward C18:3(n-6) acyl-CoA. May participate in the production of monounsaturated and of polyunsaturated VLCFAs of different chain lengths that are involved in multiple biological processes as precursors of membrane lipids and lipid mediators. In conditions where the essential linoleic and alpha linoleic fatty acids are lacking it is also involved in the synthesis of Mead acid from oleic acid. The protein is Very long chain fatty acid elongase 5 of Homo sapiens (Human).